The primary structure comprises 274 residues: Centriolar and ciliogenesis-associated protein hyls-1 (274 aa).

Disordered regions lie at residues 156-188 and 255-274; these read RSSV…SSRP and NNED…PYID. Polar residues predominate over residues 171–183; the sequence is VGLSTETEQSELQ. Positions 257 to 274 are enriched in basic and acidic residues; sequence EDWKANHDKDWSPRPYID.

This sequence belongs to the HYLS1 family. As to quaternary structure, interacts with sas-4; leading to its localization into newly forming centrioles.

The protein localises to the cytoplasm. The protein resides in the cytoskeleton. It localises to the microtubule organizing center. It is found in the centrosome. Its subcellular location is the centriole. The protein localises to the cell projection. The protein resides in the cilium. Functionally, plays an important role in ciliogenesis. The chain is Centriolar and ciliogenesis-associated protein hyls-1 from Caenorhabditis elegans.